The primary structure comprises 700 residues: DNA ligase (700 aa).

NAD(+)-binding positions include 42 to 46 (DDEYD), 91 to 92 (SL), and Glu-126. Lys-128 functions as the N6-AMP-lysine intermediate in the catalytic mechanism. Residues Arg-149, Glu-184, Lys-300, and Lys-324 each coordinate NAD(+). Positions 418, 421, 436, and 441 each coordinate Zn(2+). The region spanning 598-686 (TRTDQLSGLN…GLGERGVAED (89 aa)) is the BRCT domain.

This sequence belongs to the NAD-dependent DNA ligase family. LigA subfamily. Mn(2+) is required as a cofactor.

The catalysed reaction is NAD(+) + (deoxyribonucleotide)n-3'-hydroxyl + 5'-phospho-(deoxyribonucleotide)m = (deoxyribonucleotide)n+m + AMP + beta-nicotinamide D-nucleotide.. Functionally, DNA ligase that catalyzes the formation of phosphodiester linkages between 5'-phosphoryl and 3'-hydroxyl groups in double-stranded DNA using NAD as a coenzyme and as the energy source for the reaction. It is essential for DNA replication and repair of damaged DNA. This chain is DNA ligase, found in Deinococcus radiodurans (strain ATCC 13939 / DSM 20539 / JCM 16871 / CCUG 27074 / LMG 4051 / NBRC 15346 / NCIMB 9279 / VKM B-1422 / R1).